The primary structure comprises 25 residues: Endoglucanase 1 (25 aa).

The tract at residues 1–25 (YDASLKPNLQIPQKNIPNNDAVNIK) is disordered. Polar residues predominate over residues 10–25 (QIPQKNIPNNDAVNIK).

It carries out the reaction Endohydrolysis of (1-&gt;4)-beta-D-glucosidic linkages in cellulose, lichenin and cereal beta-D-glucans.. In terms of biological role, this enzyme hydrolyzes cellotetraose, cellopentaose, and cellohexaose to cellobiose and cellotriose but does not hydrolyze cellobiose or cellotriose. This Ruminiclostridium josui (Clostridium josui) protein is Endoglucanase 1.